Here is a 174-residue protein sequence, read N- to C-terminus: Dual-action ribosomal maturation protein DarP (174 aa).

The protein belongs to the DarP family.

The protein resides in the cytoplasm. In terms of biological role, member of a network of 50S ribosomal subunit biogenesis factors which assembles along the 30S-50S interface, preventing incorrect 23S rRNA structures from forming. Promotes peptidyl transferase center (PTC) maturation. The chain is Dual-action ribosomal maturation protein DarP from Vibrio atlanticus (strain LGP32) (Vibrio splendidus (strain Mel32)).